The sequence spans 736 residues: Zinc finger MYND domain-containing protein 15 (736 aa).

2 disordered regions span residues 70-94 (SLGQ…DEPP) and 109-192 (LEDG…KNAE). Over residues 110–123 (EDGEEGEEEEEDEE) the composition is skewed to acidic residues. Basic and acidic residues-rich tracts occupy residues 124–135 (HGERPGMEKVEP) and 165–185 (ASRE…PEKR). Residues Cys307, Cys310, Cys322, Cys325, Cys331, Cys335, His349, and Cys353 each contribute to the Zn(2+) site. The segment at 307–353 (CHVCHKHSFEVKLTPCPQCSAVLYCGEACLQADWRRCPDDVSHRFWC) adopts an MYND-type zinc-finger fold. 2 disordered regions span residues 556 to 583 (DGPE…GGRR) and 696 to 736 (GGTV…RRRR). The span at 704-718 (GPAPRPPTPAAPPVP) shows a compositional bias: pro residues. Residues 719-736 (ARRRRGEKKAARGPRRRR) show a composition bias toward basic residues.

In terms of assembly, interacts with HDAC1, HDAC3, HDAC6 and, to a lesser extent, with HDAC7. In terms of tissue distribution, testis-specific. Expressed in pachytene spermatocytes and all developing spermatids, but not in Sertoli, nor Leydig cells (at protein level).

It is found in the nucleus. The protein localises to the cytoplasm. Functionally, acts as a transcriptional repressor through interaction with histone deacetylases (HDACs). May regulate haploid genes important for spermiogenesis. The polypeptide is Zinc finger MYND domain-containing protein 15 (Zmynd15) (Mus musculus (Mouse)).